Here is a 521-residue protein sequence, read N- to C-terminus: Bifunctional purine biosynthesis protein PurH (521 aa).

An MGS-like domain is found at 1 to 147 (MGEITRALIS…KNWEGVTVLV (147 aa)).

It belongs to the PurH family.

It carries out the reaction (6R)-10-formyltetrahydrofolate + 5-amino-1-(5-phospho-beta-D-ribosyl)imidazole-4-carboxamide = 5-formamido-1-(5-phospho-D-ribosyl)imidazole-4-carboxamide + (6S)-5,6,7,8-tetrahydrofolate. The enzyme catalyses IMP + H2O = 5-formamido-1-(5-phospho-D-ribosyl)imidazole-4-carboxamide. It functions in the pathway purine metabolism; IMP biosynthesis via de novo pathway; 5-formamido-1-(5-phospho-D-ribosyl)imidazole-4-carboxamide from 5-amino-1-(5-phospho-D-ribosyl)imidazole-4-carboxamide (10-formyl THF route): step 1/1. It participates in purine metabolism; IMP biosynthesis via de novo pathway; IMP from 5-formamido-1-(5-phospho-D-ribosyl)imidazole-4-carboxamide: step 1/1. This Acidithiobacillus ferrooxidans (strain ATCC 53993 / BNL-5-31) (Leptospirillum ferrooxidans (ATCC 53993)) protein is Bifunctional purine biosynthesis protein PurH.